Reading from the N-terminus, the 138-residue chain is uncharacterized protein (138 aa).

The next 2 membrane-spanning stretches (helical) occupy residues 1-21 and 46-66; these read MEIGYIFILAGFLVIALEAIV and YAFISAIIAGVLTIIILHKFV.

Its subcellular location is the cell membrane. This is an uncharacterized protein from Methanocaldococcus jannaschii (strain ATCC 43067 / DSM 2661 / JAL-1 / JCM 10045 / NBRC 100440) (Methanococcus jannaschii).